The following is a 529-amino-acid chain: uncharacterized protein (529 aa).

The chain crosses the membrane as a helical span at residues 354–373 (FHVASFPWISWAILGSYIML).

The protein localises to the host membrane. This is an uncharacterized protein from Acidianus convivator (ATV).